Here is a 279-residue protein sequence, read N- to C-terminus: Large ribosomal subunit protein uL2 (279 aa).

2 disordered regions span residues 1–28 (MPARRYKPTSPGRRNSSVLTRDSVTKEK) and 221–279 (RGTV…GRRR). Over residues 12–22 (GRRNSSVLTRD) the composition is skewed to polar residues.

Belongs to the universal ribosomal protein uL2 family. In terms of assembly, part of the 50S ribosomal subunit. Forms a bridge to the 30S subunit in the 70S ribosome.

Functionally, one of the primary rRNA binding proteins. Required for association of the 30S and 50S subunits to form the 70S ribosome, for tRNA binding and peptide bond formation. It has been suggested to have peptidyltransferase activity; this is somewhat controversial. Makes several contacts with the 16S rRNA in the 70S ribosome. The chain is Large ribosomal subunit protein uL2 from Rubrobacter xylanophilus (strain DSM 9941 / JCM 11954 / NBRC 16129 / PRD-1).